Here is a 176-residue protein sequence, read N- to C-terminus: Sigma intracellular receptor 2 (176 aa).

Residues 1 to 9 (MGALAARRC) are Cytoplasmic-facing. The chain crosses the membrane as a helical span at residues 10 to 30 (VEWLLGLYFVSHIPITLFIDL). An EXPERA domain is found at 10-158 (VEWLLGLYFV…PYLIIPLILL (149 aa)). Residues 31–68 (QAVLPPELYPQEFSNLLRWYSKEFKDPLMQEPPVWFKS) lie on the Lumenal side of the membrane. A helical membrane pass occupies residues 69 to 89 (FLLCELVFQLPFFPIAAYAFF). The cholesterol site is built by V75 and Q77. At 90-99 (KGSCRWIRIP) the chain is on the cytoplasmic side. The helical transmembrane segment at 100–120 (AIIYAAHTITTLIPILYTLLF) threads the bilayer. The Lumenal segment spans residues 121–140 (EDFSKAVAFKGQRPESFRER). The chain crosses the membrane as a helical span at residues 141–161 (LTLVGVYAPYLIIPLILLLFM). Residues 162–176 (LRNPYYKYEEKRKKK) are Cytoplasmic-facing. The short motif at 172 to 176 (KRKKK) is the ER retention motif element.

It belongs to the TMEM97/sigma-2 receptor family. As to quaternary structure, homodimer. Interacts with NPC1; the interaction impairs NPC1-mediated cholesterol transport. Interacts with PGRMC1 and LDLR; the interaction increases LDL internalization. Interacts with histatin 1/HTN1; the interaction induces HTN1-stimulating wound healing. Interacts with TSPO.

It is found in the rough endoplasmic reticulum membrane. The protein localises to the nucleus membrane. Functionally, sigma-2 receptor which contributes to ameliorate dysfunctional cellular processes and slow degenerative progression by regulating cell functions including cholesterol biosynthesis/trafficking, membrane trafficking, autophagy, lipid membrane-bound protein trafficking, and receptor stabilization at the cell surface. Forms a ternary complex with PGRMC1 receptor and low density lipoprotein receptor/LDLR at the plasma membrane, which increases LDLR-mediated LDL cholesterol internalization. Decreases lysosomal sterol transporter NPC1 availability to the cell, probably through NPC1-binding, hence controlling lipid transport, including cholesterol and LBPA, outside of late endosome/lysosome. Binds regio- and stereoselective ligand 20(S)-hydroxycholesterol (20(S)-OHC) which enhances TMEM97-NPC1 interaction and decreases TMEM97-PGRMC1 and TMEM97-TSPO interactions, thereby linking OHC binding to cholesterol homeostasis. Also able to bind cholesterol. Binds histatin 1 (Hst 1)/HN1 salivary peptide at the ER membrane, which is critical for increasing mitochondria-ER contacts and stimulating Hst1 wound healing properties. May alter the activity of some cytochrome P450 proteins. Although shows homologies with sterol isomerases (EXPERA domain), not able to catalyze sterol isomerization. However, may act as sensors of these molecules. Acts as a quality control factor in the ER, promoting the proteolytic degradation of nonproductive and extramitochondrial precursor proteins in the ER membrane thus removing them from the ER surface. The chain is Sigma intracellular receptor 2 from Mus musculus (Mouse).